A 288-amino-acid chain; its full sequence is Borealin (288 aa).

The required for interaction with INCENP stretch occupies residues 1–58 (MAPKKRSSRGTRTNTLRSRKLASFLKDFDREVQVRTKQIESDRQTLLKEVENLYNIEV). The segment at 1–88 (MAPKKRSSRG…NRQALEEAAT (88 aa)) is required for centromere localization. A required for interaction with SENP3 region spans residues 1-149 (MAPKKRSSRG…RKSHKNLRSA (149 aa)). The required to form a minimal CPC core complex that localizes to the central spindle and midbody and properly executes the role of the CPC during cytokinesis stretch occupies residues 10–109 (GTRTNTLRSR…TAEAIQTPLK (100 aa)). Positions 20–78 (KLASFLKDFDREVQVRTKQIESDRQTLLKEVENLYNIEVLRLPKALQVMKWLDYFALGG) are required for interaction with INCENP and BIRC5. The residue at position 88 (Thr88) is a Phosphothreonine; by TTK. Arg91 is subject to Citrulline. Phosphothreonine; by TTK is present on Thr94. Residue Thr106 is modified to Phosphothreonine. Ser110 bears the Phosphoserine mark. The segment covering 124–134 (KEEEEDEEEEG) has biased composition (acidic residues). Residues 124–173 (KEEEEDEEEEGGGGGGRKSHKNLRSARVKRCPPSKKRTQSIQGRSRSKRL) form a disordered region. Basic residues predominate over residues 140–161 (RKSHKNLRSARVKRCPPSKKRT). Residue Lys144 forms a Glycyl lysine isopeptide (Lys-Gly) (interchain with G-Cter in SUMO2) linkage. Residue Ser174 is modified to Phosphoserine; by AURKB. A phosphothreonine mark is found at Thr197 and Thr212. Phosphoserine occurs at positions 227, 232, 246, and 252.

It belongs to the borealin family. In terms of assembly, may form homooligomers and homodimers. Component of the chromosomal passenger complex (CPC) composed of at least BIRC5/survivin, CDCA8/borealin, INCENP, AURKB or AURKC; in the complex forms a triple-helix bundle-based subcomplex with INCENP and BIRC5. Interacts with SENP3, UBE2I and RANBP2. Interacts (phosphorylated) with SGO1 and SGO2; the association is dependent on CDK1. Post-translationally, phosphorylated by TTK, essentially at Thr-88 and Thr-94. Phosphorylation (probably by CDK1) promotes targeting of the CPC to centromeric DNA. In terms of processing, sumoylated by UBE2I and RANBP2. Desumoylated by SENP3 through the removal of SUMO2 and SUMO3. Citrullinated by PADI4.

The protein resides in the nucleus. The protein localises to the nucleolus. Its subcellular location is the cytoplasm. It localises to the chromosome. It is found in the centromere. The protein resides in the cytoskeleton. The protein localises to the spindle. Its function is as follows. Component of the chromosomal passenger complex (CPC), a complex that acts as a key regulator of mitosis. The CPC complex has essential functions at the centromere in ensuring correct chromosome alignment and segregation and is required for chromatin-induced microtubule stabilization and spindle assembly. In the complex, it may be required to direct the CPC to centromeric DNA. The chain is Borealin (Cdca8) from Rattus norvegicus (Rat).